A 152-amino-acid polypeptide reads, in one-letter code: 6,7-dimethyl-8-ribityllumazine synthase (152 aa).

Residues F21, 55–57 (AFE), and 79–81 (CVI) each bind 5-amino-6-(D-ribitylamino)uracil. 84 to 85 (AT) lines the (2S)-2-hydroxy-3-oxobutyl phosphate pocket. H87 serves as the catalytic Proton donor. F112 contributes to the 5-amino-6-(D-ribitylamino)uracil binding site. Residue R126 coordinates (2S)-2-hydroxy-3-oxobutyl phosphate.

This sequence belongs to the DMRL synthase family. In terms of assembly, forms an icosahedral capsid composed of 60 subunits, arranged as a dodecamer of pentamers.

The catalysed reaction is (2S)-2-hydroxy-3-oxobutyl phosphate + 5-amino-6-(D-ribitylamino)uracil = 6,7-dimethyl-8-(1-D-ribityl)lumazine + phosphate + 2 H2O + H(+). It participates in cofactor biosynthesis; riboflavin biosynthesis; riboflavin from 2-hydroxy-3-oxobutyl phosphate and 5-amino-6-(D-ribitylamino)uracil: step 1/2. Functionally, catalyzes the formation of 6,7-dimethyl-8-ribityllumazine by condensation of 5-amino-6-(D-ribitylamino)uracil with 3,4-dihydroxy-2-butanone 4-phosphate. This is the penultimate step in the biosynthesis of riboflavin. This is 6,7-dimethyl-8-ribityllumazine synthase from Staphylococcus carnosus (strain TM300).